The chain runs to 109 residues: Small ribosomal subunit protein bS6 (109 aa).

This sequence belongs to the bacterial ribosomal protein bS6 family.

Its function is as follows. Binds together with bS18 to 16S ribosomal RNA. In Anaplasma phagocytophilum (strain HZ), this protein is Small ribosomal subunit protein bS6.